The following is a 454-amino-acid chain: Death-associated protein kinase 3 (454 aa).

The Protein kinase domain occupies 13–275 (YEMGEELGSG…IAQSLEHSWI (263 aa)). ATP-binding positions include 19-27 (LGSGQFAIV) and Lys-42. Ser-50 bears the Phosphoserine; by autocatalysis mark. Residues Glu-94 and Val-96 each contribute to the pyridone 6 site. Asp-139 functions as the Proton acceptor in the catalytic mechanism. The segment at 161-204 (DFGIAHKIEAGNEFKNIFGTPEFVAPEIVNYEPLGLEADMWSIG) is activation segment. Phosphothreonine occurs at positions 180 and 225. Residue Thr-265 is modified to Phosphothreonine; by autocatalysis and ROCK1. Thr-299 is modified (phosphothreonine; by autocatalysis, DAPK1 and ROCK1). Thr-306 is modified (phosphothreonine; by autocatalysis). Ser-309 carries the phosphoserine; by DAPK1 modification. Ser-311 bears the Phosphoserine; by autocatalysis and DAPK1 mark. Ser-312, Ser-318, and Ser-326 each carry phosphoserine; by DAPK1. Residues 427–441 (VASEMRFVQDLVRAL) form a leucine-zipper region.

The protein belongs to the protein kinase superfamily. CAMK Ser/Thr protein kinase family. DAP kinase subfamily. Homooligomer in its kinase-active form (homotrimers and homodimers are reported); monomeric in its kinase-inactive form. Homodimerization is required for activation segment autophosphorylation. Isoform 1 and isoform 2 interact with myosin and PPP1R12A; interaction of isoform 1 with PPP1R12A is inhibited by RhoA dominant negative form. Interacts with NLK, DAXX, STAT3, RHOD (GTP-bound form) and TCP10L. Interacts with PAWR; the interaction is reported conflictingly: according to PubMed:17953487 does not interact with PAWR. Interacts with ULK1; may be a substrate of ULK1. Interacts with LUZP1; the interaction is likely to occur throughout the cell cycle and reduces the LUZP1-mediated suppression of MYL9 phosphorylation. It depends on Mg(2+) as a cofactor. The phosphorylation status is critical for kinase activity, oligomerization and intracellular localization. Phosphorylation at Thr-180, Thr-225 and Thr-265 is essential for activity. The phosphorylated form is localized in the cytoplasm promoted by phosphorylation at Thr-299; nuclear translocation or retention is maximal when it is not phosphorylated. Phosphorylation increases the trimeric form, and its dephosphorylation favors a kinase-inactive monomeric form. Both isoform 1 and isoform 2 can undergo autophosphorylation. In terms of tissue distribution, widely expressed. Isoform 1 and isoform 2 are expressed in the bladder smooth muscle.

It is found in the nucleus. The protein resides in the PML body. The protein localises to the cytoplasm. It localises to the cytoskeleton. Its subcellular location is the microtubule organizing center. It is found in the centrosome. The protein resides in the chromosome. The protein localises to the centromere. It localises to the spindle. Its subcellular location is the midbody. It carries out the reaction L-seryl-[protein] + ATP = O-phospho-L-seryl-[protein] + ADP + H(+). The enzyme catalyses L-threonyl-[protein] + ATP = O-phospho-L-threonyl-[protein] + ADP + H(+). With respect to regulation, a sequential activation is proposed: autophosphorylation at consensus sites is leading to dimerization of the catalytic domain stabilized by phosphorylation at Ser-50 and activation segment exchange (producing an active confirmation of both kinase modules in trans) followed by phosphorylation at Thr-180 in the activation segment and at other regulatory sites. Phosphorylation at Thr-180, Thr-225 and Thr-265 is essential for activity. Oligomerization is required for full enzymatic activity. Inhibited by pyridone-6 (K00225), a potent, ATP-competitive inhibitor. Functionally, serine/threonine kinase which is involved in the regulation of apoptosis, autophagy, transcription, translation and actin cytoskeleton reorganization. Involved in the regulation of smooth muscle contraction. Regulates both type I (caspase-dependent) apoptotic and type II (caspase-independent) autophagic cell deaths signal, depending on the cellular setting. Involved in regulation of starvation-induced autophagy. Regulates myosin phosphorylation in both smooth muscle and non-muscle cells. In smooth muscle, regulates myosin either directly by phosphorylating MYL12B and MYL9 or through inhibition of smooth muscle myosin phosphatase (SMPP1M) via phosphorylation of PPP1R12A; the inhibition of SMPP1M functions to enhance muscle responsiveness to Ca(2+) and promote a contractile state. Phosphorylates MYL12B in non-muscle cells leading to reorganization of actin cytoskeleton. Isoform 2 can phosphorylate myosin, PPP1R12A and MYL12B. Overexpression leads to condensation of actin stress fibers into thick bundles. Involved in actin filament focal adhesion dynamics. The function in both reorganization of actin cytoskeleton and focal adhesion dissolution is modulated by RhoD. Positively regulates canonical Wnt/beta-catenin signaling through interaction with NLK and TCF7L2. Phosphorylates RPL13A on 'Ser-77' upon interferon-gamma activation which is causing RPL13A release from the ribosome, RPL13A association with the GAIT complex and its subsequent involvement in transcript-selective translation inhibition. Enhances transcription from AR-responsive promoters in a hormone- and kinase-dependent manner. Involved in regulation of cell cycle progression and cell proliferation. May be a tumor suppressor. The protein is Death-associated protein kinase 3 (DAPK3) of Homo sapiens (Human).